A 95-amino-acid chain; its full sequence is Large ribosomal subunit protein bL25 (95 aa).

Belongs to the bacterial ribosomal protein bL25 family. Part of the 50S ribosomal subunit; part of the 5S rRNA/L5/L18/L25 subcomplex. Contacts the 5S rRNA. Binds to the 5S rRNA independently of L5 and L18.

Its function is as follows. This is one of the proteins that binds to the 5S RNA in the ribosome where it forms part of the central protuberance. This chain is Large ribosomal subunit protein bL25, found in Shewanella frigidimarina (strain NCIMB 400).